The primary structure comprises 68 residues: Neuronal regeneration-related protein (68 aa).

The interval 21–54 (MEGRLPKGRLPVPKEVNRKKNDETNAASLTPLGS) is disordered. Residues 44–54 (TNAASLTPLGS) are compositionally biased toward polar residues.

As to quaternary structure, interacts with the latency-associated peptides (LAP) of TGFB1 and TGFB2; the interaction results in a decrease in TGFB autoinduction. Interacts with FLNA. Phosphorylated on Ser-59. Phosphorylation decreases stability and activity.

It localises to the cytoplasm. May have roles in neural function and cellular differentiation. Ectopic expression promotes axonal regeneration, induces differentiation of fibroblast into myofibroblast, induces myofibroblast ameboid migration, augments motility of gliomas, and increases retinoic-acid regulation of lipid-droplet biogenesis. Down-regulates the expression of TGFB1 and TGFB2 but not of TGFB3. May play a role in the regulation of alveolar generation. This is Neuronal regeneration-related protein (NREP) from Pongo abelii (Sumatran orangutan).